The chain runs to 138 residues: PTS system sorbose-specific EIIA component (138 aa).

The PTS EIIA type-4 domain occupies 1 to 125; sequence MEIILVGHAH…KIKEEFSTSL (125 aa). The active-site Tele-phosphohistidine intermediate is the histidine 8. Histidine 8 carries the phosphohistidine; by HPr modification.

The protein localises to the cytoplasm. Functionally, the phosphoenolpyruvate-dependent sugar phosphotransferase system (PTS), a major carbohydrate active transport system, catalyzes the phosphorylation of incoming sugar substrates concomitant with their translocation across the cell membrane. The enzyme II SorABCD PTS system is involved in L-sorbose transport. The sequence is that of PTS system sorbose-specific EIIA component from Lacticaseibacillus casei (Lactobacillus casei).